The primary structure comprises 243 residues: NAD-dependent protein deacetylase (243 aa).

The region spanning 1-243 (MKHDLETLKH…VSVVKSLMTE (243 aa)) is the Deacetylase sirtuin-type domain. NAD(+) is bound by residues A24, F35, R36, Q105, I107, D108, and H123. Position 35 (F35) interacts with nicotinamide. Nicotinamide is bound by residues I107 and D108. Catalysis depends on H123, which acts as the Proton acceptor. The Zn(2+) site is built by C131, C134, C151, and C154. NAD(+) is bound by residues S192, S193, N215, and D232.

The protein belongs to the sirtuin family. Class U subfamily. Requires Zn(2+) as cofactor.

Its subcellular location is the cytoplasm. It catalyses the reaction N(6)-acetyl-L-lysyl-[protein] + NAD(+) + H2O = 2''-O-acetyl-ADP-D-ribose + nicotinamide + L-lysyl-[protein]. Functionally, NAD-dependent protein deacetylase which modulates the activities of several enzymes which are inactive in their acetylated form. The sequence is that of NAD-dependent protein deacetylase from Staphylococcus aureus (strain NCTC 8325 / PS 47).